A 69-amino-acid chain; its full sequence is uncharacterized protein (69 aa).

It localises to the mitochondrion. This is an uncharacterized protein from Marchantia polymorpha (Common liverwort).